We begin with the raw amino-acid sequence, 432 residues long: 3-phosphoshikimate 1-carboxyvinyltransferase (432 aa).

The 3-phosphoshikimate site is built by Lys-23, Ser-24, and Arg-28. Position 23 (Lys-23) interacts with phosphoenolpyruvate. 2 residues coordinate phosphoenolpyruvate: Gly-95 and Arg-123. 3-phosphoshikimate-binding residues include Ser-167, Gln-169, Asp-317, and Lys-344. Residue Gln-169 participates in phosphoenolpyruvate binding. The active-site Proton acceptor is the Asp-317. Phosphoenolpyruvate contacts are provided by Arg-348 and Arg-390.

It belongs to the EPSP synthase family. In terms of assembly, monomer.

Its subcellular location is the cytoplasm. The enzyme catalyses 3-phosphoshikimate + phosphoenolpyruvate = 5-O-(1-carboxyvinyl)-3-phosphoshikimate + phosphate. It functions in the pathway metabolic intermediate biosynthesis; chorismate biosynthesis; chorismate from D-erythrose 4-phosphate and phosphoenolpyruvate: step 6/7. Functionally, catalyzes the transfer of the enolpyruvyl moiety of phosphoenolpyruvate (PEP) to the 5-hydroxyl of shikimate-3-phosphate (S3P) to produce enolpyruvyl shikimate-3-phosphate and inorganic phosphate. The chain is 3-phosphoshikimate 1-carboxyvinyltransferase from Staphylococcus haemolyticus (strain JCSC1435).